The chain runs to 594 residues: Cationic amino acid transporter 1 (594 aa).

At Ala-2 the chain carries N-acetylalanine. Residues 2-78 are Cytoplasmic-facing; sequence ASGGGDDGLR…EMKKTLTWWD (77 aa). Residues 79 to 99 form a helical membrane-spanning segment; it reads LMWFGIGAVIGSGIFVLTGLE. Residues 100-104 lie on the Extracellular side of the membrane; it reads ARNHS. Asn-102 carries N-linked (GlcNAc...) asparagine glycosylation. The helical transmembrane segment at 105-125 threads the bilayer; sequence GPAVVLSYVVSGVSAMLSVFC. The Cytoplasmic portion of the chain corresponds to 126 to 149; that stretch reads YTEFAVEIPVAGGSFAYLRVELGD. A helical membrane pass occupies residues 150 to 170; that stretch reads FMAFIAAGNIILEYVVGGAAV. Residues 171–201 lie on the Extracellular side of the membrane; sequence ARSWTSYFATLLNHKPEDFRIIVHKLGEDYS. A helical membrane pass occupies residues 202 to 222; that stretch reads HLDPIAVGVCAIICVLAVVGT. Residues 223 to 227 are Cytoplasmic-facing; the sequence is KGSSR. The chain crosses the membrane as a helical span at residues 228 to 248; that stretch reads FNYIASIIHMVVILFVIIAGF. The Extracellular segment spans residues 249–266; it reads TKADVKNYSDFTPYGVRG. N-linked (GlcNAc...) asparagine glycosylation occurs at Asn-255. A helical transmembrane segment spans residues 267–287; sequence VFKSAAVLFFAYIGFDAVSTM. Residues 288-297 lie on the Cytoplasmic side of the membrane; the sequence is AEETKNPGRD. Residues 298 to 318 form a helical membrane-spanning segment; it reads IPIGLVGSMVVTTVCYCLMAV. Residues 319–348 lie on the Extracellular side of the membrane; that stretch reads TLCLMQPYQQIDPDAPFSVAFSAVGWDWAK. The helical transmembrane segment at 349 to 369 threads the bilayer; sequence YIVAFGALKGMTTVLLVGAIG. At 370-393 the chain is on the cytoplasmic side; the sequence is QARYMTHIARAHMMPPWLAQVNAK. A helical transmembrane segment spans residues 394–414; that stretch reads TGTPINATVVMLAATALIAFF. The Extracellular portion of the chain corresponds to 415–418; the sequence is TKLK. The chain crosses the membrane as a helical span at residues 419 to 439; it reads ILADLLSVSTLFIFMFVAVAL. Topologically, residues 440-457 are cytoplasmic; it reads LVRRYYVTGETSTRDRNK. Residues 458–478 traverse the membrane as a helical segment; that stretch reads FLVFLGLILASSTATAVYWAL. Over 479–483 the chain is Extracellular; it reads EEEGW. The helical transmembrane segment at 484-504 threads the bilayer; the sequence is IGYCITVPIWFLSTVAMKFLV. Residues 505 to 511 lie on the Cytoplasmic side of the membrane; sequence PQARAPK. Residues 512-532 form a helical membrane-spanning segment; sequence IWGVPLVPWLPSASIAINIFL. The Extracellular segment spans residues 533–543; sequence LGSIDTKSFVR. Residues 544-564 traverse the membrane as a helical segment; the sequence is FAIWTGILLIYYVLFGLHATY. Residues 565-594 are Cytoplasmic-facing; the sequence is DTAKATLKEKQALQKAEEGGVVADNSCSAT.

This sequence belongs to the amino acid-polyamine-organocation (APC) superfamily. Cationic amino acid transporter (CAT) (TC 2.A.3.3) family. Expressed in roots, stems, flowers, petioles, seeds, siliques, and leaves. Mostly present in major veins.

The protein resides in the membrane. Its activity is regulated as follows. Inhibited by the protonophore 2,4-dinitrophenol. High-affinity permease involved in the transport of the cationic amino acids (e.g. arginine, lysine, histidine, citrulline, valine, and glutamate). Transport mostly basic amino acids, and, to a lower extent neutral and acidic amino acids. May function as a proton symporter. In Arabidopsis thaliana (Mouse-ear cress), this protein is Cationic amino acid transporter 1 (CAT1).